Reading from the N-terminus, the 291-residue chain is Putative butyrophilin-like protein 10 pseudogene (291 aa).

Residues 1–26 (MAVTCDPEAFLSICFVTLVFLQLPLA) form the signal peptide. The Ig-like V-type domain occupies 27–146 (SIWKADFDVT…GEATVQVQVA (120 aa)). Residues 27 to 254 (SIWKADFDVT…RSSQFTAWKA (228 aa)) are Extracellular-facing. Residues cysteine 54 and cysteine 128 are joined by a disulfide bond. Asparagine 59 carries N-linked (GlcNAc...) asparagine glycosylation. Residues 255–275 (ALPLILVAMGLVIAGGICIFW) traverse the membrane as a helical segment. At 276 to 291 (KRQREKNKASLEEERE) the chain is on the cytoplasmic side.

Belongs to the immunoglobulin superfamily. BTN/MOG family.

Its subcellular location is the membrane. The sequence is that of Putative butyrophilin-like protein 10 pseudogene from Homo sapiens (Human).